Consider the following 706-residue polypeptide: Sodium- and chloride-dependent glycine transporter 1 (706 aa).

Residues 1–26 (MSGGDTRAAIARPRMAAAHGPVAPSS) form a disordered region. At 1–108 (MSGGDTRAAI…KRGNWGNQIE (108 aa)) the chain is on the cytoplasmic side. The span at 7–18 (RAAIARPRMAAA) shows a compositional bias: low complexity. Transmembrane regions (helical) follow at residues 109–129 (FVLT…FPYL), 136–156 (GAFM…LFFM), and 188–208 (VSTY…YYFF). At 209-285 (SSMTHVLPWA…LSDDIGNFGE (77 aa)) the chain is on the extracellular side. The next 9 helical transmembrane spans lie at 286–306 (VRLP…LCLI), 315–335 (VVYF…VRGV), 360–380 (VWGD…GGLI), 407–427 (SVYA…HLGV), 450–470 (LLPI…LLGL), 506–526 (VAGF…WLLL), 530–550 (YAAS…IMYI), 570–590 (LFFQ…ILVF), and 610–630 (VAIG…YAMF). Residues 631–706 (RLCRTDGDTL…GSSRLQDSRI (76 aa)) lie on the Cytoplasmic side of the membrane. Serine 673 and serine 698 each carry phosphoserine. Residues 695–706 (SNGSSRLQDSRI) are essential for interaction with EXOC1.

This sequence belongs to the sodium:neurotransmitter symporter (SNF) (TC 2.A.22) family. SLC6A9 subfamily. Interacts with EXOC1; interaction increases the transporter capacity of SLC6A9 probably by promoting its insertion into the cell membrane. Interacts with EXOC3 and EXOC4. Expressed in the brain, kidney, pancreas, lung, placenta and liver. In terms of tissue distribution, expressed only in the brain.

The protein resides in the cell membrane. The enzyme catalyses glycine(out) + chloride(out) + 2 Na(+)(out) = glycine(in) + chloride(in) + 2 Na(+)(in). With respect to regulation, inhibited by sarcosine. Sodium- and chloride-dependent glycine transporter. Essential for regulating glycine concentrations at inhibitory glycinergic synapses. Functionally, sodium- and chloride-dependent glycine transporter. The sequence is that of Sodium- and chloride-dependent glycine transporter 1 (SLC6A9) from Homo sapiens (Human).